We begin with the raw amino-acid sequence, 184 residues long: ATP synthase subunit b, chloroplastic (184 aa).

The chain crosses the membrane as a helical span at residues 27 to 49 (LATNPINLSVVLGVLIFFGKGVL).

The protein belongs to the ATPase B chain family. As to quaternary structure, F-type ATPases have 2 components, F(1) - the catalytic core - and F(0) - the membrane proton channel. F(1) has five subunits: alpha(3), beta(3), gamma(1), delta(1), epsilon(1). F(0) has four main subunits: a(1), b(1), b'(1) and c(10-14). The alpha and beta chains form an alternating ring which encloses part of the gamma chain. F(1) is attached to F(0) by a central stalk formed by the gamma and epsilon chains, while a peripheral stalk is formed by the delta, b and b' chains.

Its subcellular location is the plastid. It is found in the chloroplast thylakoid membrane. Functionally, f(1)F(0) ATP synthase produces ATP from ADP in the presence of a proton or sodium gradient. F-type ATPases consist of two structural domains, F(1) containing the extramembraneous catalytic core and F(0) containing the membrane proton channel, linked together by a central stalk and a peripheral stalk. During catalysis, ATP synthesis in the catalytic domain of F(1) is coupled via a rotary mechanism of the central stalk subunits to proton translocation. Component of the F(0) channel, it forms part of the peripheral stalk, linking F(1) to F(0). In Cuscuta exaltata (Tall dodder), this protein is ATP synthase subunit b, chloroplastic.